Here is a 191-residue protein sequence, read N- to C-terminus: Guanylate kinase (191 aa).

One can recognise a Guanylate kinase-like domain in the interval 8 to 188; sequence GRLVVLAGPS…AVSDIKEILV (181 aa). 15–22 provides a ligand contact to ATP; the sequence is GPSAVGKS.

Belongs to the guanylate kinase family.

It localises to the cytoplasm. The catalysed reaction is GMP + ATP = GDP + ADP. Essential for recycling GMP and indirectly, cGMP. The protein is Guanylate kinase of Corynebacterium diphtheriae (strain ATCC 700971 / NCTC 13129 / Biotype gravis).